Consider the following 797-residue polypeptide: Trafficking protein particle complex subunit 12 (797 aa).

Disordered stretches follow at residues 1-257 (META…PSLS) and 286-338 (SNPN…VPES). A compositionally biased stretch (low complexity) spans 9–23 (QSPSEASPSAQAGPE). Over residues 29-43 (MSREEESQPLYHEET) the composition is skewed to basic and acidic residues. Residues 47–58 (GGDEFASEENEP) show a composition bias toward acidic residues. 2 stretches are compositionally biased toward basic and acidic residues: residues 66–75 (FGDKLNEHMM) and 107–121 (ATDH…KEVV). Phosphoserine occurs at positions 125 and 128. Thr-130 bears the Phosphothreonine mark. Over residues 173–185 (VGPKDSLAPREEQ) the composition is skewed to basic and acidic residues. The segment covering 206–216 (IFSQATATPSQ) has biased composition (polar residues). The segment covering 232-244 (SPSFSSTSETSAK) has biased composition (low complexity). Residues Ser-234, Ser-309, and Ser-314 each carry the phosphoserine modification. TPR repeat units lie at residues 607 to 640 (GRVL…YPEQ), 642 to 675 (PQLL…TQKL), 682 to 715 (IMVL…DPTN), and 716 to 749 (AVAN…DPRH).

Component of the multisubunit TRAPP (transport protein particle) complex, which includes at least TRAPPC2, TRAPPC2L, TRAPPC3, TRAPPC3L, TRAPPC4, TRAPPC5, TRAPPC8, TRAPPC9, TRAPPC10, TRAPPC11 and TRAPPC12. Interacts with CENPE. Phosphorylated as the cells enter mitosis but is dephosphorylated at or before the onset of anaphase. The phosphorylated form recruits CENPE to kinetochores more efficiently than the non-phosphorylated form.

It is found in the endoplasmic reticulum-Golgi intermediate compartment. Its subcellular location is the nucleus. Functionally, component of the TRAPP complex, which is involved in endoplasmic reticulum to Golgi apparatus trafficking at a very early stage. Also plays a role in chromosome congression, kinetochore assembly and stability and controls the recruitment of CENPE to the kinetochores. The sequence is that of Trafficking protein particle complex subunit 12 from Mus musculus (Mouse).